A 406-amino-acid polypeptide reads, in one-letter code: Cysteine desulfurase (406 aa).

Position 226 is an N6-(pyridoxal phosphate)lysine (Lys226). Cys364 acts as the Cysteine persulfide intermediate in catalysis.

The protein belongs to the class-V pyridoxal-phosphate-dependent aminotransferase family. Csd subfamily. Homodimer. Interacts with SufE and the SufBCD complex composed of SufB, SufC and SufD. The interaction with SufE is required to mediate the direct transfer of the sulfur atom from the S-sulfanylcysteine. Pyridoxal 5'-phosphate is required as a cofactor.

It is found in the cytoplasm. It catalyses the reaction (sulfur carrier)-H + L-cysteine = (sulfur carrier)-SH + L-alanine. The enzyme catalyses L-selenocysteine + AH2 = hydrogenselenide + L-alanine + A + H(+). It functions in the pathway cofactor biosynthesis; iron-sulfur cluster biosynthesis. Cysteine desulfurases mobilize the sulfur from L-cysteine to yield L-alanine, an essential step in sulfur metabolism for biosynthesis of a variety of sulfur-containing biomolecules. Component of the suf operon, which is activated and required under specific conditions such as oxidative stress and iron limitation. Acts as a potent selenocysteine lyase in vitro, that mobilizes selenium from L-selenocysteine. Selenocysteine lyase activity is however unsure in vivo. The sequence is that of Cysteine desulfurase from Escherichia coli O139:H28 (strain E24377A / ETEC).